The sequence spans 222 residues: Probable transaldolase (222 aa).

The active-site Schiff-base intermediate with substrate is the lysine 91.

Belongs to the transaldolase family. Type 3B subfamily.

It is found in the cytoplasm. It catalyses the reaction D-sedoheptulose 7-phosphate + D-glyceraldehyde 3-phosphate = D-erythrose 4-phosphate + beta-D-fructose 6-phosphate. It functions in the pathway carbohydrate degradation; pentose phosphate pathway; D-glyceraldehyde 3-phosphate and beta-D-fructose 6-phosphate from D-ribose 5-phosphate and D-xylulose 5-phosphate (non-oxidative stage): step 2/3. Transaldolase is important for the balance of metabolites in the pentose-phosphate pathway. The sequence is that of Probable transaldolase from Chlorobium chlorochromatii (strain CaD3).